The following is a 475-amino-acid chain: E3 ubiquitin-protein ligase TRIM62 (475 aa).

The segment at 11–54 (CSICLSIYQDPVSLGCEHYFCRRCITEHWVRQEAQGARDCPECR) adopts an RING-type zinc-finger fold. The segment at 88 to 128 (RAARPCQAHDKVKLFCLTDRALLCFFCDEPALHEQHQVTGI) adopts a B box-type zinc-finger fold. Zn(2+) is bound by residues Cys-93, His-96, Cys-114, and His-120. Residues 121 to 241 (EQHQVTGIDD…LQERLAETDR (121 aa)) adopt a coiled-coil conformation. Residues 277–475 (PLQYTIWKSL…QPLRINTVRI (199 aa)) form the B30.2/SPRY domain.

Belongs to the TRIM/RBCC family. Interacts with the ubiquitin-conjugating enzyme, UBE2D2. Polyubiquitinated, autoubiquitinated in the presence of UBE2D2.

It localises to the cytoplasm. It carries out the reaction S-ubiquitinyl-[E2 ubiquitin-conjugating enzyme]-L-cysteine + [acceptor protein]-L-lysine = [E2 ubiquitin-conjugating enzyme]-L-cysteine + N(6)-ubiquitinyl-[acceptor protein]-L-lysine.. It functions in the pathway protein modification; protein ubiquitination. E3 ubiquitin ligase that plays a role in antifungal immunity by mediating 'Lys-27'-linked ubiquitination of CARD9 downstream of C-type lectin receptors; leading to CARD9 activation, followed by activation of NF-kappa-B and MAP kinase p38 pathways. E3 ubiquitin ligase activity is dependent on E2 ubiquitin-conjugating enzyme UBE2D2. The protein is E3 ubiquitin-protein ligase TRIM62 of Mus musculus (Mouse).